The chain runs to 312 residues: 2-dehydropantoate 2-reductase (312 aa).

NADP(+) is bound by residues 7-12 (GAGAMG), N105, and A131. Residue N105 participates in substrate binding. K187 functions as the Proton donor in the catalytic mechanism. 3 residues coordinate substrate: N191, N195, and S260. NADP(+) is bound at residue E273.

Belongs to the ketopantoate reductase family.

It localises to the cytoplasm. It catalyses the reaction (R)-pantoate + NADP(+) = 2-dehydropantoate + NADPH + H(+). It functions in the pathway cofactor biosynthesis; (R)-pantothenate biosynthesis; (R)-pantoate from 3-methyl-2-oxobutanoate: step 2/2. Its function is as follows. Catalyzes the NADPH-dependent reduction of ketopantoate into pantoic acid. The protein is 2-dehydropantoate 2-reductase of Lactococcus lactis subsp. lactis (strain IL1403) (Streptococcus lactis).